The sequence spans 723 residues: Ribosome quality control complex subunit 1 (723 aa).

A disordered region spans residues 21–125; it reads SNSNANKMTS…DKGSDDDDDD (105 aa). A compositionally biased stretch (polar residues) spans 27 to 37; that stretch reads KMTSGKSTAGN. Over residues 93–108 the composition is skewed to basic residues; it reads SSRRKKNKKAKRKQKN. The span at 109 to 118 shows a compositional bias: basic and acidic residues; sequence HTAEAAKDKG. Ser-119 is modified (phosphoserine). A Phosphothreonine modification is found at Thr-158. A Phosphoserine modification is found at Ser-160.

This sequence belongs to the TCF25 family. As to quaternary structure, component of the ribosome quality control complex (RQC), composed of the E3 ubiquitin ligase RKR1/LTN1, RQC1 and RQC2, as well as CDC48 and its ubiquitin-binding cofactors. RQC forms a stable complex with 60S ribosomal subunits.

It is found in the cytoplasm. Functionally, component of the ribosome quality control complex (RQC), a ribosome-associated complex that mediates ubiquitination and extraction of incompletely synthesized nascent chains for proteasomal degradation. Within the RQC complex, RQC1 is essential for the recruitment of CDC48 to incompletely synthesized nascent polypeptides that are ubiquitinated by RKR1/LTN1. This Saccharomyces cerevisiae (strain ATCC 204508 / S288c) (Baker's yeast) protein is Ribosome quality control complex subunit 1.